Reading from the N-terminus, the 107-residue chain is Thioredoxin (107 aa).

Residues 2-107 (VVHIENLNAF…TLKQKINDHK (106 aa)) enclose the Thioredoxin domain. Catalysis depends on nucleophile residues cysteine 32 and cysteine 35. A disulfide bond links cysteine 32 and cysteine 35. Residues cysteine 71 and cysteine 75 each carry the S-nitrosocysteine modification.

Belongs to the thioredoxin family. May be nitrosylated on several cysteine residues, depending on the oxidation state. Nitrosylated Cys-75 may serve as donor for nitrosylation of target proteins.

It localises to the nucleus. The protein localises to the cytoplasm. The protein resides in the secreted. Functionally, participates in various redox reactions through the reversible oxidation of its active center dithiol to a disulfide and catalyzes dithiol-disulfide exchange reactions. Plays a role in the reversible S-nitrosylation of cysteine residues in target proteins, and thereby contributes to the response to intracellular nitric oxide. Nitrosylates the active site Cys of CASP3 in response to nitric oxide (NO), and thereby inhibits caspase-3 activity. Induces the FOS/JUN AP-1 DNA binding activity in ionizing radiation (IR) cells through its oxidation/reduction status and stimulates AP-1 transcriptional activity. The sequence is that of Thioredoxin (txn) from Ictalurus punctatus (Channel catfish).